Consider the following 340-residue polypeptide: Heat-inducible transcription repressor HrcA (340 aa).

The protein belongs to the HrcA family.

Its function is as follows. Negative regulator of class I heat shock genes (grpE-dnaK-dnaJ and groELS operons). Prevents heat-shock induction of these operons. The polypeptide is Heat-inducible transcription repressor HrcA (Mycoplasma mycoides subsp. mycoides SC (strain CCUG 32753 / NCTC 10114 / PG1)).